The following is a 102-amino-acid chain: NADH-quinone oxidoreductase subunit K (102 aa).

Transmembrane regions (helical) follow at residues 5 to 25 (LAHYLILGAILFAIGIFGIFL), 31 to 51 (IILLMSIELMLLAVNMNFVAF), and 62 to 82 (VFVFFILTVAAAEAAIGLAIL).

This sequence belongs to the complex I subunit 4L family. As to quaternary structure, NDH-1 is composed of 14 different subunits. Subunits NuoA, H, J, K, L, M, N constitute the membrane sector of the complex.

It localises to the cell inner membrane. The catalysed reaction is a quinone + NADH + 5 H(+)(in) = a quinol + NAD(+) + 4 H(+)(out). Functionally, NDH-1 shuttles electrons from NADH, via FMN and iron-sulfur (Fe-S) centers, to quinones in the respiratory chain. The immediate electron acceptor for the enzyme in this species is believed to be ubiquinone. Couples the redox reaction to proton translocation (for every two electrons transferred, four hydrogen ions are translocated across the cytoplasmic membrane), and thus conserves the redox energy in a proton gradient. In Bordetella avium (strain 197N), this protein is NADH-quinone oxidoreductase subunit K.